Reading from the N-terminus, the 385-residue chain is T-box transcription factor TBX10 (385 aa).

Positions 22–61 (TTSSGWEPRLGSPFPSGPCTSSTGAQAVAEPTGQGPKNPR) are disordered. The segment at residues 69–252 (LEMKPLWEEF…SNPFAKGFRE (184 aa)) is a DNA-binding region (T-box).

Its subcellular location is the nucleus. In terms of biological role, probable transcriptional regulator involved in developmental processes. The polypeptide is T-box transcription factor TBX10 (TBX10) (Homo sapiens (Human)).